A 510-amino-acid polypeptide reads, in one-letter code: NADH-quinone oxidoreductase subunit N (510 aa).

14 helical membrane passes run 14–34 (LLPEFIILGFATFLSLLDLFA), 42–62 (VIGWLSFLGTVIAAIFVIINM), 84–104 (AFKLIFLAGTAFAILISLSYL), 113–133 (GEYYYLLLTGLLGAMVMASSA), 135–155 (LITLFVGLELLSLSSYVLVGL), 170–190 (VVSGSIATAVLLFGMSYVYGL), 208–228 (MAGYQFLVYTAFAFLAVGLAF), 247–267 (PTPVTVFLAVVSKAAGFALIF), 286–306 (FFFEEGSLYLGLMAAASMIIG), 323–343 (SGIAQAGYLLVPFVPPTSLFF), 346–366 (VIFYLFGYLLVSFGAFAVIMV), 390–410 (AIAMSIFLLSLAGIPITVGFF), 426–446 (WLAAIMIITSVISYYYYFGII), and 466–486 (IWTFILIMAIATVFFGAFPGL).

It belongs to the complex I subunit 2 family. In terms of assembly, NDH-1 is composed of 14 different subunits. Subunits NuoA, H, J, K, L, M, N constitute the membrane sector of the complex.

The protein resides in the cell membrane. It carries out the reaction a quinone + NADH + 5 H(+)(in) = a quinol + NAD(+) + 4 H(+)(out). NDH-1 shuttles electrons from NADH, via FMN and iron-sulfur (Fe-S) centers, to quinones in the respiratory chain. The immediate electron acceptor for the enzyme in this species is believed to be a menaquinone. Couples the redox reaction to proton translocation (for every two electrons transferred, four hydrogen ions are translocated across the cytoplasmic membrane), and thus conserves the redox energy in a proton gradient. The polypeptide is NADH-quinone oxidoreductase subunit N (Brevibacillus brevis (strain 47 / JCM 6285 / NBRC 100599)).